A 299-amino-acid polypeptide reads, in one-letter code: Probable 4-deoxy-4-formamido-L-arabinose-phosphoundecaprenol deformylase ArnD (299 aa).

Residues 2 to 263 (IDVGLRIDVD…EASARGIRFV (262 aa)) form the NodB homology domain.

The protein belongs to the polysaccharide deacetylase family. ArnD deformylase subfamily.

The catalysed reaction is 4-deoxy-4-formamido-alpha-L-arabinopyranosyl di-trans,octa-cis-undecaprenyl phosphate + H2O = 4-amino-4-deoxy-alpha-L-arabinopyranosyl di-trans,octa-cis-undecaprenyl phosphate + formate. The protein operates within glycolipid biosynthesis; 4-amino-4-deoxy-alpha-L-arabinose undecaprenyl phosphate biosynthesis; 4-amino-4-deoxy-alpha-L-arabinose undecaprenyl phosphate from UDP-4-deoxy-4-formamido-beta-L-arabinose and undecaprenyl phosphate: step 2/2. Its pathway is bacterial outer membrane biogenesis; lipopolysaccharide biosynthesis. Its function is as follows. Catalyzes the deformylation of 4-deoxy-4-formamido-L-arabinose-phosphoundecaprenol to 4-amino-4-deoxy-L-arabinose-phosphoundecaprenol. The modified arabinose is attached to lipid A and is required for resistance to polymyxin and cationic antimicrobial peptides. In Aeromonas salmonicida (strain A449), this protein is Probable 4-deoxy-4-formamido-L-arabinose-phosphoundecaprenol deformylase ArnD.